The sequence spans 216 residues: Small ribosomal subunit protein eS6 (216 aa).

This sequence belongs to the eukaryotic ribosomal protein eS6 family.

In Staphylothermus marinus (strain ATCC 43588 / DSM 3639 / JCM 9404 / F1), this protein is Small ribosomal subunit protein eS6.